The following is a 207-amino-acid chain: Large ribosomal subunit protein uL4 (207 aa).

Positions histidine 49 to isoleucine 78 are disordered.

Belongs to the universal ribosomal protein uL4 family. In terms of assembly, part of the 50S ribosomal subunit.

In terms of biological role, one of the primary rRNA binding proteins, this protein initially binds near the 5'-end of the 23S rRNA. It is important during the early stages of 50S assembly. It makes multiple contacts with different domains of the 23S rRNA in the assembled 50S subunit and ribosome. Forms part of the polypeptide exit tunnel. This chain is Large ribosomal subunit protein uL4, found in Streptococcus pyogenes serotype M49 (strain NZ131).